The primary structure comprises 160 residues: Large ribosomal subunit protein uL22c (160 aa).

Belongs to the universal ribosomal protein uL22 family. In terms of assembly, part of the 50S ribosomal subunit.

It localises to the plastid. It is found in the chloroplast. Its function is as follows. This protein binds specifically to 23S rRNA. In terms of biological role, the globular domain of the protein is located near the polypeptide exit tunnel on the outside of the subunit, while an extended beta-hairpin is found that lines the wall of the exit tunnel in the center of the 70S ribosome. This chain is Large ribosomal subunit protein uL22c (rpl22), found in Arabidopsis thaliana (Mouse-ear cress).